The primary structure comprises 239 residues: Norbelladine 4'-O-methyltransferase (239 aa).

Residues valine 55, glutamate 77, 79-80 (GV), serine 85, aspartate 103, and alanine 132 contribute to the S-adenosyl-L-methionine site. Aspartate 155 contributes to the a divalent metal cation binding site. Aspartate 157 serves as a coordination point for S-adenosyl-L-methionine. The a divalent metal cation site is built by aspartate 181 and asparagine 182.

It belongs to the class I-like SAM-binding methyltransferase superfamily. Cation-dependent O-methyltransferase family. The cofactor is Mg(2+). In terms of tissue distribution, highly expressed in bulbs. Detected in leaves and inflorescences.

The enzyme catalyses norbelladine + S-adenosyl-L-methionine = 4'-O-methylnorbelladine + S-adenosyl-L-homocysteine + H(+). The protein operates within alkaloid biosynthesis. Its function is as follows. 4'-O-methyltransferase converting norbelladine to 4'-O-methylnorbelladine. 4'-O-methylnorbelladine is a precursor to all Amaryllidaceae alkaloids such as galanthamine, lycorine and haemanthamine, and including haemanthamine- and crinamine-type alkaloids, promising anticancer agents. Can use norbelladine, N-methylnorbelladine and dopamine as substrate, but not caffeic acid, vanillin, 3,4-dihydroxybenzaldehyde and tyramine. The polypeptide is Norbelladine 4'-O-methyltransferase (Narcissus aff. pseudonarcissus MK-2014 (Daffodil)).